A 206-amino-acid polypeptide reads, in one-letter code: Thymidylate kinase (206 aa).

Residue 10–17 (GVDGVGKT) coordinates ATP.

This sequence belongs to the thymidylate kinase family.

It carries out the reaction dTMP + ATP = dTDP + ADP. Functionally, phosphorylation of dTMP to form dTDP in both de novo and salvage pathways of dTTP synthesis. The protein is Thymidylate kinase of Bifidobacterium longum (strain NCC 2705).